Consider the following 130-residue polypeptide: Small ribosomal subunit protein uS8 (130 aa).

It belongs to the universal ribosomal protein uS8 family.

It localises to the cytoplasm. This chain is Small ribosomal subunit protein uS8 (RPS15A), found in Brassica napus (Rape).